The chain runs to 228 residues: 5'(3')-deoxyribonucleotidase, mitochondrial (228 aa).

Residues 1–31 constitute a mitochondrion transit peptide; that stretch reads MIRLGGWCARRLCSAAVPAGRRGAAGGLGLA. D41 functions as the Nucleophile in the catalytic mechanism. 2 residues coordinate Mg(2+): D41 and D43. Catalysis depends on D43, which acts as the Proton donor. D43, F49, F75, W76, V77, W96, T130, and K165 together coordinate substrate. A Mg(2+)-binding site is contributed by D176.

This sequence belongs to the 5'(3')-deoxyribonucleotidase family. As to quaternary structure, homodimer. The cofactor is Mg(2+). Highly expressed in heart, brain and skeletal muscle. Detected at very low levels in kidney and pancreas.

The protein localises to the mitochondrion. Dephosphorylates specifically the 5' and 2'(3')-phosphates of uracil and thymine deoxyribonucleotides, and so protects mitochondrial DNA replication from excess dTTP. Has only marginal activity towards dIMP and dGMP. This chain is 5'(3')-deoxyribonucleotidase, mitochondrial (NT5M), found in Homo sapiens (Human).